The following is a 398-amino-acid chain: Tryptophan synthase beta chain (398 aa).

Lysine 89 is modified (N6-(pyridoxal phosphate)lysine).

The protein belongs to the TrpB family. In terms of assembly, tetramer of two alpha and two beta chains. Requires pyridoxal 5'-phosphate as cofactor.

The catalysed reaction is (1S,2R)-1-C-(indol-3-yl)glycerol 3-phosphate + L-serine = D-glyceraldehyde 3-phosphate + L-tryptophan + H2O. Its pathway is amino-acid biosynthesis; L-tryptophan biosynthesis; L-tryptophan from chorismate: step 5/5. Functionally, the beta subunit is responsible for the synthesis of L-tryptophan from indole and L-serine. The protein is Tryptophan synthase beta chain of Methanopyrus kandleri (strain AV19 / DSM 6324 / JCM 9639 / NBRC 100938).